Here is a 492-residue protein sequence, read N- to C-terminus: MDPYKYRPSSANNSPFWTTNSGAPVWNNNSSMTVGTRGPILLEDYHLVEKLANFDRERIPERVVHARGASAKGFFEVTHDITHLTCADFLRAPGVQTPVIVRFSTVIHERGSPETLRDPRGFAVKFYTREGNFDLVGNNFPVFFVRDGMKFPDMVHALKPNPKSHIQENWRILDFFSHHPESLHMFSFLFDDLGVPQDYRHMEGSGVNTYMLINKAGKAHYVKFHWKPTCGVKCLLEEEAIKVGGANHSHATKDLYDSIAAGNYPEWKLFIQIIDPDHEDRFDFDPLDVTKTWPEDILPLQPVGRLVLNKNIDNFFAENEQLAFWPAIVVPGVYCSDDKLLQTRIFSYSDAQRHRLGPNYLQLPVNAPKCAHHNNHHEGFMNFMHRDEEVNYFPSRFDPCRHAEQYPIPPCVLTGKRDKCIIEKENNFKQPGERYRSWAPDRQERFICRWVDALSDPRVTHEIRSIWFSYWSQADKTLGQKIASRLNVRPTM.

Catalysis depends on residues histidine 65 and asparagine 138. A heme-binding site is contributed by tyrosine 348.

This sequence belongs to the catalase family. Homotetramer. Heme serves as cofactor.

It localises to the peroxisome. The enzyme catalyses 2 H2O2 = O2 + 2 H2O. Functionally, occurs in almost all aerobically respiring organisms and serves to protect cells from the toxic effects of hydrogen peroxide. This is Catalase isozyme 3 (CAT3) from Nicotiana plumbaginifolia (Leadwort-leaved tobacco).